We begin with the raw amino-acid sequence, 551 residues long: Interleukin-2 receptor subunit beta (551 aa).

An N-terminal signal peptide occupies residues 1-26 (MAAPALSWRLPLLILLLPLATPWASA). At 27–240 (TVNGTSQFTC…TKPASLGKDT (214 aa)) the chain is on the extracellular side. Residues Asn29, Asn43, and Asn71 are each glycosylated (N-linked (GlcNAc...) asparagine). Cys36 and Cys46 are oxidised to a cystine. A disulfide bond links Cys74 and Cys86. Residues 134-234 (APISLQVVHV…QPLAFRTKPA (101 aa)) enclose the Fibronectin type-III domain. Asn149 carries N-linked (GlcNAc...) asparagine glycosylation. Residues 220–224 (WSPWS) carry the WSXWS motif motif. A helical transmembrane segment spans residues 241–265 (IPWLGHLLVGLSGAFGFIILVYLLI). At 266-551 (NCRNTGPWLK…LQGQDPTHLV (286 aa)) the chain is on the cytoplasmic side. The short motif at 278–286 (LKCHTPDPS) is the Box 1 motif element. Disordered stretches follow at residues 393 to 412 (DEGVAGAPTGSSPQPLQPLS) and 433 to 476 (SLLG…GPPT).

It belongs to the type I cytokine receptor family. Type 4 subfamily. As to quaternary structure, non-covalent dimer of an alpha and a beta subunit. IL2R exists in 3 different forms: a high affinity dimer, an intermediate affinity monomer (beta subunit), and a low affinity monomer (alpha subunit). The high and intermediate affinity forms also associate with a gamma subunit. Interacts with SHB upon interleukin stimulation.

It is found in the cell membrane. The protein resides in the cell surface. Its function is as follows. Receptor for interleukin-2. This beta subunit is involved in receptor mediated endocytosis and transduces the mitogenic signals of IL2. Probably in association with IL15RA, involved in the stimulation of neutrophil phagocytosis by IL15. This Pan troglodytes (Chimpanzee) protein is Interleukin-2 receptor subunit beta (IL2RB).